The following is a 349-amino-acid chain: Phosphoribosylformylglycinamidine cyclo-ligase (349 aa).

It belongs to the AIR synthase family.

It is found in the cytoplasm. The catalysed reaction is 2-formamido-N(1)-(5-O-phospho-beta-D-ribosyl)acetamidine + ATP = 5-amino-1-(5-phospho-beta-D-ribosyl)imidazole + ADP + phosphate + H(+). Its pathway is purine metabolism; IMP biosynthesis via de novo pathway; 5-amino-1-(5-phospho-D-ribosyl)imidazole from N(2)-formyl-N(1)-(5-phospho-D-ribosyl)glycinamide: step 2/2. The protein is Phosphoribosylformylglycinamidine cyclo-ligase of Listeria monocytogenes serovar 1/2a (strain ATCC BAA-679 / EGD-e).